The primary structure comprises 397 residues: DNA-directed RNA polymerase subunit Rpo1C (397 aa).

The protein belongs to the RNA polymerase beta' chain family. Part of the RNA polymerase complex.

The protein resides in the cytoplasm. It catalyses the reaction RNA(n) + a ribonucleoside 5'-triphosphate = RNA(n+1) + diphosphate. Functionally, DNA-dependent RNA polymerase (RNAP) catalyzes the transcription of DNA into RNA using the four ribonucleoside triphosphates as substrates. Forms part of the jaw domain. This is DNA-directed RNA polymerase subunit Rpo1C from Pyrococcus horikoshii (strain ATCC 700860 / DSM 12428 / JCM 9974 / NBRC 100139 / OT-3).